A 911-amino-acid polypeptide reads, in one-letter code: Protein translocase subunit SecA (911 aa).

ATP contacts are provided by residues Gln-87, 105–109 (GEGKT), and Asp-512. The segment at 865 to 892 (AAEQDGAEEGAVATATAPVRSENKVGRN) is disordered. Over residues 873–883 (EGAVATATAPV) the composition is skewed to low complexity. Cys-895, Cys-897, Cys-906, and His-907 together coordinate Zn(2+).

Belongs to the SecA family. Monomer and homodimer. Part of the essential Sec protein translocation apparatus which comprises SecA, SecYEG and auxiliary proteins SecDF-YajC and YidC. It depends on Zn(2+) as a cofactor.

The protein localises to the cell inner membrane. It localises to the cytoplasm. It carries out the reaction ATP + H2O + cellular proteinSide 1 = ADP + phosphate + cellular proteinSide 2.. Functionally, part of the Sec protein translocase complex. Interacts with the SecYEG preprotein conducting channel. Has a central role in coupling the hydrolysis of ATP to the transfer of proteins into and across the cell membrane, serving both as a receptor for the preprotein-SecB complex and as an ATP-driven molecular motor driving the stepwise translocation of polypeptide chains across the membrane. This chain is Protein translocase subunit SecA, found in Ectopseudomonas mendocina (strain ymp) (Pseudomonas mendocina).